A 321-amino-acid chain; its full sequence is Olfactory receptor 52N2 (321 aa).

Residues 1 to 27 (MSGDNSSSLTPGFFILNGVPGLEATHI) lie on the Extracellular side of the membrane. Asparagine 5 carries N-linked (GlcNAc...) asparagine glycosylation. Residues 28-48 (WISLPFCFMYIIAVVGNCGLI) form a helical membrane-spanning segment. Over 49 to 56 (CLISHEEA) the chain is Cytoplasmic. A helical membrane pass occupies residues 57–77 (LHRPMYYFLALLSFTDVTLCT). Residues 78-101 (TMVPNMLCIFWFNLKEIDFNACLA) lie on the Extracellular side of the membrane. An intrachain disulfide couples cysteine 99 to cysteine 191. Residues 102–122 (QMFFVHMLTGMESGVLMLMAL) traverse the membrane as a helical segment. The Cytoplasmic segment spans residues 123 to 141 (DRYVAICYPLRYATILTNP). Residues 142-162 (VIAKAGLATFLRNVMLIIPFT) traverse the membrane as a helical segment. At 163 to 198 (LLTKRLPYCRGNFIPHTYCDHMSVAKVSCGNFKVNA) the chain is on the extracellular side. The chain crosses the membrane as a helical span at residues 199–219 (IYGLMVALLIGVFDICCISVS). Residues 220 to 239 (YTMILQAVMSLSSADARHKA) are Cytoplasmic-facing. The helical transmembrane segment at 240–260 (FSTCTSHMCSIVITYVAAFFT) threads the bilayer. At 261 to 276 (FFTHRFVGHNIPNHIH) the chain is on the extracellular side. A helical transmembrane segment spans residues 277 to 297 (IIVANLYLLLPPTMNPIVYGV). Topologically, residues 298 to 321 (KTKQIQEGVIKFLLGDKVSFTYDK) are cytoplasmic.

Belongs to the G-protein coupled receptor 1 family.

Its subcellular location is the cell membrane. In terms of biological role, odorant receptor. The chain is Olfactory receptor 52N2 (OR52N2) from Homo sapiens (Human).